Reading from the N-terminus, the 251-residue chain is Hydroxyacylglutathione hydrolase (251 aa).

Residues His53, His55, Asp57, His58, His110, Asp127, and His165 each contribute to the Zn(2+) site.

This sequence belongs to the metallo-beta-lactamase superfamily. Glyoxalase II family. As to quaternary structure, monomer. It depends on Zn(2+) as a cofactor.

It catalyses the reaction an S-(2-hydroxyacyl)glutathione + H2O = a 2-hydroxy carboxylate + glutathione + H(+). The protein operates within secondary metabolite metabolism; methylglyoxal degradation; (R)-lactate from methylglyoxal: step 2/2. Thiolesterase that catalyzes the hydrolysis of S-D-lactoyl-glutathione to form glutathione and D-lactic acid. This chain is Hydroxyacylglutathione hydrolase, found in Shigella dysenteriae serotype 1 (strain Sd197).